The primary structure comprises 171 residues: Tetratricopeptide repeat protein 9C (171 aa).

TPR repeat units follow at residues 8-41, 72-107, and 108-141; these read AQLY…LRGL, TDCY…QPDN, and AKAL…KPKD.

This sequence belongs to the TTC9 family.

This chain is Tetratricopeptide repeat protein 9C (TTC9C), found in Bos taurus (Bovine).